The primary structure comprises 235 residues: Motile sperm domain-containing protein 3 (235 aa).

Disordered stretches follow at residues 1 to 25 (MRRG…RGAP) and 143 to 171 (ELQG…FQEH). The 113-residue stretch at 33-145 (PVLVFPPDLV…RAPAYPLELQ (113 aa)) folds into the MSP domain. The segment covering 149 to 164 (DPAPRPGPPAGTPPPT) has biased composition (pro residues). A run of 2 helical transmembrane segments spans residues 180–200 (SFLL…LPLP) and 213–233 (VSLG…MVFL).

Its subcellular location is the membrane. This Homo sapiens (Human) protein is Motile sperm domain-containing protein 3 (MOSPD3).